We begin with the raw amino-acid sequence, 742 residues long: Conidiogenone synthase (742 aa).

Residues 1-332 (MGETIADVYA…SLCVPRYFKV (332 aa)) are terpene cyclase. D97 contacts Mg(2+). Substrate contacts are provided by residues D97, 190–193 (RIVD), N234, 238–242 (SWDKE), and 328–329 (RY). The short motif at 97 to 101 (DDETD) is the DDXXD 1 element. The short motif at 234–242 (NDLFSWDKE) is the NSE/DTE element. The segment at 333 to 742 (ERNPYKDHLE…LRAMEEASQK (410 aa)) is prenyltransferase. K414, R417, and H446 together coordinate isopentenyl diphosphate. D453 and D457 together coordinate Mg(2+). A DDXXD 2 motif is present at residues 453–457 (DDIQD). A dimethylallyl diphosphate-binding site is contributed by R462. R463 is a binding site for isopentenyl diphosphate. Dimethylallyl diphosphate contacts are provided by K539, T540, Q575, N582, K592, and K602. The disordered stretch occupies residues 701 to 724 (EAHKSDSAWKVNQRRAWKGSQKNG).

This sequence in the N-terminal section; belongs to the terpene synthase family. In the C-terminal section; belongs to the FPP/GGPP synthase family. As to quaternary structure, hexamer. It depends on Mg(2+) as a cofactor.

The enzyme catalyses isopentenyl diphosphate + (2E,6E)-farnesyl diphosphate = (2E,6E,10E)-geranylgeranyl diphosphate + diphosphate. Its pathway is secondary metabolite biosynthesis; terpenoid biosynthesis. Functionally, bifunctional terpene synthase; part of the gene cluster that mediates the biosynthesis of conidiogenone, a diterpene known to induce the conidiation. The bifunctional terpene synthase PrDS converts isopentenyl diphosphate (IPP) and dimethylallyl diphosphate (DMAPP) into deoxyconidiogenol. The C-terminal prenyltransferase (PT) domain of PrDS catalyzes formation of GGPP, whereas the N-terminal terpene cyclase (TC) domain catalyzes the cyclization of GGPP into deoxyconidiogenol. The cytochrome P450 monooxygenase PrP450 then catalyzes two rounds of oxidation to furnish conidiogenone. In Penicillium roqueforti (strain FM164), this protein is Conidiogenone synthase.